Reading from the N-terminus, the 142-residue chain is Group IIE secretory phospholipase A2 (142 aa).

Positions 1 to 19 are cleaved as a signal peptide; it reads MKSPHVLVFLCLLVALVTG. 5 residues coordinate Ca(2+): D41, G43, Y45, G47, and G49. Intrachain disulfides connect C44–C135, C46–C62, C61–C115, C67–C142, C68–C108, C77–C101, and C95–C106. Residue H65 is part of the active site. D66 serves as a coordination point for Ca(2+). D109 is a catalytic residue. Ca(2+) is bound by residues Y130 and N132.

The protein belongs to the phospholipase A2 family. Ca(2+) is required as a cofactor. As to expression, restricted to the brain, heart, lung, and placenta.

Its subcellular location is the secreted. The protein resides in the cytoplasm. It carries out the reaction a 1,2-diacyl-sn-glycero-3-phosphoethanolamine + H2O = a 1-acyl-sn-glycero-3-phosphoethanolamine + a fatty acid + H(+). The catalysed reaction is 1-hexadecanoyl-2-(9Z-octadecenoyl)-sn-glycero-3-phosphoethanolamine + H2O = 1-hexadecanoyl-sn-glycero-3-phosphoethanolamine + (9Z)-octadecenoate + H(+). It catalyses the reaction 1-hexadecanoyl-2-(9Z,12Z-octadecadienoyl)-sn-glycero-3-phosphoethanolamine + H2O = 1-hexadecanoyl-sn-glycero-3-phosphoethanolamine + (9Z,12Z)-octadecadienoate + H(+). The enzyme catalyses 1-hexadecanoyl-2-(5Z,8Z,11Z,14Z-eicosatetraenoyl)-sn-glycero-3-phosphoethanolamine + H2O = 1-hexadecanoyl-sn-glycero-3-phosphoethanolamine + (5Z,8Z,11Z,14Z)-eicosatetraenoate + H(+). It carries out the reaction 1,2-dihexadecanoyl-sn-glycero-3-phospho-(1'-sn-glycerol) + H2O = 1-hexadecanoyl-sn-glycero-3-phospho-(1'-sn-glycerol) + hexadecanoate + H(+). The catalysed reaction is 1-hexadecanoyl-2-(9Z-octadecenoyl)-sn-glycero-3-phosphoglycerol + H2O = 1-hexadecanoyl-sn-glycero-3-phosphoglycerol + (9Z)-octadecenoate + H(+). It catalyses the reaction a 1,2-diacyl-sn-glycero-3-phosphocholine + H2O = a 1-acyl-sn-glycero-3-phosphocholine + a fatty acid + H(+). The enzyme catalyses 1,2-dihexadecanoyl-sn-glycero-3-phosphocholine + H2O = 1-hexadecanoyl-sn-glycero-3-phosphocholine + hexadecanoate + H(+). It carries out the reaction 1-hexadecanoyl-2-(9Z-octadecenoyl)-sn-glycero-3-phosphocholine + H2O = 1-hexadecanoyl-sn-glycero-3-phosphocholine + (9Z)-octadecenoate + H(+). The catalysed reaction is 1-hexadecanoyl-2-(9Z,12Z-octadecadienoyl)-sn-glycero-3-phosphocholine + H2O = (9Z,12Z)-octadecadienoate + 1-hexadecanoyl-sn-glycero-3-phosphocholine + H(+). It catalyses the reaction 1-hexadecanoyl-2-(4Z,7Z,10Z,13Z,16Z,19Z-docosahexaenoyl)-sn-glycero-3-phosphocholine + H2O = (4Z,7Z,10Z,13Z,16Z,19Z)-docosahexaenoate + 1-hexadecanoyl-sn-glycero-3-phosphocholine + H(+). Secretory calcium-dependent phospholipase A2 that primarily targets extracellular phospholipids. Hydrolyzes the ester bond of the fatty acyl group attached at sn-2 position of phospholipids (phospholipase A2 activity), releasing various unsaturated fatty acids including oleoate, linoleoate, arachidonate, docosahexaenoate and lysophosphatidylethanolamines in preference to lysophosphatidylcholines. In response to high-fat diet, hydrolyzes minor lipoprotein phospholipids including phosphatidylserines, phosphatidylinositols and phosphatidylglycerols, altering lipoprotein composition and fat storage in adipose tissue and liver. May act in an autocrine and paracrine manner. Contributes to lipid remodeling of cellular membranes and generation of lipid mediators involved in pathogen clearance. Cleaves sn-2 fatty acyl chains of phosphatidylglycerols and phosphatidylethanolamines, which are major components of membrane phospholipids in bacteria. Acts as a hair follicle phospholipase A2. Selectively releases lysophosphatidylethanolamines (LPE) and various unsaturated fatty acids in skin to regulate hair follicle homeostasis. May regulate the inflammatory response by releasing arachidonate, a precursor of prostaglandins and leukotrienes. Upon allergen exposure, may participate in allergic inflammatory response by enhancing leukotriene C4 synthesis and degranulation in mast cells. The protein is Group IIE secretory phospholipase A2 (PLA2G2E) of Homo sapiens (Human).